A 343-amino-acid chain; its full sequence is S-adenosylmethionine:tRNA ribosyltransferase-isomerase (343 aa).

It belongs to the QueA family. As to quaternary structure, monomer.

It is found in the cytoplasm. The enzyme catalyses 7-aminomethyl-7-carbaguanosine(34) in tRNA + S-adenosyl-L-methionine = epoxyqueuosine(34) in tRNA + adenine + L-methionine + 2 H(+). It functions in the pathway tRNA modification; tRNA-queuosine biosynthesis. Its function is as follows. Transfers and isomerizes the ribose moiety from AdoMet to the 7-aminomethyl group of 7-deazaguanine (preQ1-tRNA) to give epoxyqueuosine (oQ-tRNA). This chain is S-adenosylmethionine:tRNA ribosyltransferase-isomerase, found in Dehalococcoides mccartyi (strain ATCC BAA-2100 / JCM 16839 / KCTC 5957 / BAV1).